The primary structure comprises 443 residues: Glucose-6-phosphate isomerase (443 aa).

Residue glutamate 285 is the Proton donor of the active site. Residues histidine 306 and lysine 420 contribute to the active site.

This sequence belongs to the GPI family.

The protein resides in the cytoplasm. The catalysed reaction is alpha-D-glucose 6-phosphate = beta-D-fructose 6-phosphate. The protein operates within carbohydrate biosynthesis; gluconeogenesis. It functions in the pathway carbohydrate degradation; glycolysis; D-glyceraldehyde 3-phosphate and glycerone phosphate from D-glucose: step 2/4. Functionally, catalyzes the reversible isomerization of glucose-6-phosphate to fructose-6-phosphate. This is Glucose-6-phosphate isomerase from Staphylococcus aureus (strain Mu3 / ATCC 700698).